Here is a 729-residue protein sequence, read N- to C-terminus: MEVEDSGGVVLTAYHSYARAQPPNAESRCAPRAAASHPLSRKSIPRCRRINRMLSNESLHPPAFSRSNSEASVDSASMEDFWREIESIKDSSMGGQEEPPPAEVTPVDEGELEAEWLQDVGLSTLISGDEEEDGKALLSTLTRTQAAAVQKRYHTYTQTMRKKDKQSIRDVRDIFGVSESPPRDTCGNHTNQLDGTKEERELPRVIKTSGSMPDDASLNSTTLSDASQDKEGSFAVPRSDSVAILETIPVLPVHSNGSPEPGQPVQNAISDDDFLEKNIPPEAEELSFEVSYSEMVTEALKRNKLKKSEIKKEDYVLTKFNVQKTRFGLTEAGDLSAEDMKKIRHLSLIELTAFFDAFGIQLKRNKTEKVKGRDNGIFGVPLTVLLDGDRKKDPGVKVPLVLQKFFEKVEESGLESEGIFRLSGCTAKVKQYREELDAKFNADKFKWDKMCHREAAVMLKAFFRELPTSLFPVEYIPAFISLMERGPHVKVQFQALHLMVMALPDANRDAAQALMTFFNKVIANESKNRMSLWNISTVMAPNLFFSRSKHSDYEELLLANTAAHIIRLMLKYQKILWKVPSFLITQVRRMNEATMLLKKQLPSVRKLLRRKTLERETASPKTSKVLQKSPSARRMSDVPEGVIRVHAPLLSKVSMAIQLNNQTKAKDILAKFQYENSHGSSECIKIQNQRLYEIGGNIGEHCLDPDAYILDVYRINPQAEWVIKPQQSS.

Disordered regions lie at residues 20–42 (AQPPNAESRCAPRAAASHPLSRK) and 55–105 (SNES…AEVT). The segment covering 65 to 75 (SRSNSEASVDS) has biased composition (polar residues). Serine 72 is modified (phosphoserine). Residues 80 to 89 (DFWREIESIK) show a composition bias toward basic and acidic residues. Position 159 is a phosphothreonine (threonine 159). A disordered region spans residues 176-236 (GVSESPPRDT…SQDKEGSFAV (61 aa)). Residues 195-204 (GTKEERELPR) show a composition bias toward basic and acidic residues. Positions 217-226 (SLNSTTLSDA) are enriched in polar residues. Residues 380–577 (VPLTVLLDGD…LMLKYQKILW (198 aa)) form the Rho-GAP domain. A disordered region spans residues 612–631 (TLERETASPKTSKVLQKSPS). The span at 619 to 630 (SPKTSKVLQKSP) shows a compositional bias: polar residues.

Expressed in testis. Expressed at moderate level in kidney and ovary, and weakly expressed in spleen and skeletal muscle.

GTPase activator for the Rho-type GTPases by converting them to an inactive GDP-bound state. The protein is Rho GTPase-activating protein 28 (ARHGAP28) of Homo sapiens (Human).